The following is a 250-amino-acid chain: UPF0014 membrane protein YjkA (250 aa).

6 consecutive transmembrane segments (helical) span residues 3-23 (YLSL…SKSF), 32-52 (IIAT…LSLI), 57-77 (HPVF…QNVI), 91-111 (FAAL…LHII), 117-137 (YVIP…SLFL), and 214-234 (LLIV…LSVL).

This sequence belongs to the UPF0014 family.

Its subcellular location is the cell membrane. This is UPF0014 membrane protein YjkA (yjkA) from Bacillus subtilis (strain 168).